Here is a 396-residue protein sequence, read N- to C-terminus: 1-deoxy-D-xylulose 5-phosphate reductoisomerase (396 aa).

NADPH is bound by residues Thr17, Gly18, Ser19, Ile20, Asn47, and Asn130. Lys131 is a 1-deoxy-D-xylulose 5-phosphate binding site. Glu132 contacts NADPH. Residue Asp156 coordinates Mn(2+). 1-deoxy-D-xylulose 5-phosphate-binding residues include Ser157, Glu158, Ser182, and His205. Glu158 provides a ligand contact to Mn(2+). Residue Gly211 participates in NADPH binding. 4 residues coordinate 1-deoxy-D-xylulose 5-phosphate: Ser218, Asn223, Lys224, and Glu227. Glu227 is a Mn(2+) binding site.

Belongs to the DXR family. Mg(2+) is required as a cofactor. It depends on Mn(2+) as a cofactor.

The enzyme catalyses 2-C-methyl-D-erythritol 4-phosphate + NADP(+) = 1-deoxy-D-xylulose 5-phosphate + NADPH + H(+). Its pathway is isoprenoid biosynthesis; isopentenyl diphosphate biosynthesis via DXP pathway; isopentenyl diphosphate from 1-deoxy-D-xylulose 5-phosphate: step 1/6. Its function is as follows. Catalyzes the NADPH-dependent rearrangement and reduction of 1-deoxy-D-xylulose-5-phosphate (DXP) to 2-C-methyl-D-erythritol 4-phosphate (MEP). This Rhizobium johnstonii (strain DSM 114642 / LMG 32736 / 3841) (Rhizobium leguminosarum bv. viciae) protein is 1-deoxy-D-xylulose 5-phosphate reductoisomerase.